Reading from the N-terminus, the 123-residue chain is Small ribosomal subunit protein uS12 (123 aa).

Asp89 carries the 3-methylthioaspartic acid modification.

Belongs to the universal ribosomal protein uS12 family. In terms of assembly, part of the 30S ribosomal subunit. Contacts proteins S8 and S17. May interact with IF1 in the 30S initiation complex.

With S4 and S5 plays an important role in translational accuracy. Functionally, interacts with and stabilizes bases of the 16S rRNA that are involved in tRNA selection in the A site and with the mRNA backbone. Located at the interface of the 30S and 50S subunits, it traverses the body of the 30S subunit contacting proteins on the other side and probably holding the rRNA structure together. The combined cluster of proteins S8, S12 and S17 appears to hold together the shoulder and platform of the 30S subunit. The sequence is that of Small ribosomal subunit protein uS12 from Bradyrhizobium diazoefficiens (strain JCM 10833 / BCRC 13528 / IAM 13628 / NBRC 14792 / USDA 110).